The primary structure comprises 421 residues: AA11 family lytic polysaccharide monooxygenase (421 aa).

The N-terminal stretch at 1–19 is a signal peptide; it reads MFSKAFLSAALLGAAAVEG. The Cu(+) site is built by His-20, His-79, and Glu-93. Intrachain disulfides connect Cys-48-Cys-162, Cys-84-Cys-110, and Cys-201-Cys-235. The N-linked (GlcNAc...) asparagine glycan is linked to Asn-117. The segment at 231–349 is disordered; it reads GSQACTGTPT…SSSSSSSGAL (119 aa). The span at 247–285 shows a compositional bias: low complexity; it reads TAGSSGSSGSSSGSSSGGSSSSAAGSGATAPPAPAVSST. Positions 304-314 are enriched in polar residues; it reads SPAQPTHTSAP. The span at 315 to 349 shows a compositional bias: low complexity; it reads SGGSSSGSGSSSGSNSGSSSGSSSSSSSSSSSGAL.

It belongs to the polysaccharide monooxygenase AA11 family. Requires Cu(2+) as cofactor.

Functionally, lytic polysaccharide monooxygenase (LPMO) that depolymerizes chitin via the oxidation of scissile beta-(1-4)-glycosidic bonds, yielding C1 or C4 oxidation products. Catalysis by LPMOs requires the reduction of the active-site copper from Cu(II) to Cu(I) by a reducing agent and H(2)O(2) or O(2) as a cosubstrate. Active on chitin but has no activity on other substrates, including diverse mannans, cellulose and starch (data not shown). Primary chain cleavage yields predominantly aldonic acid oligosaccharides with even-numbered degrees of polymerization. The chain is AA11 family lytic polysaccharide monooxygenase from Aspergillus oryzae (strain ATCC 42149 / RIB 40) (Yellow koji mold).